The primary structure comprises 122 residues: MVPGPPESVVRFFLWFCFLLPPTRKASCDPRDLKSCNRPCVWSRLLKPNSSLSNLETAYFPQILRFLRPWYFSRSHLNYHQKAPARWEWLYSIYRKGTKAQRRNVLRSPCAPPQPSWPCSVI.

The N-terminal stretch at Met-1–Cys-28 is a signal peptide. Asn-49 carries an N-linked (GlcNAc...) asparagine glycan.

The protein localises to the secreted. This is an uncharacterized protein from Homo sapiens (Human).